The primary structure comprises 890 residues: MTQYTPMIQQYLKVKADYQDAFLFFRLGDFYEMFFEDAVKAAHELEITLTSRDGGSSERIPMCGVPYHAAKNYIEQLVEKGYKVAVCEQVEDPKTAKGVVRREVVQLITPGTMMEGRTIDEKENNFLAALTHFEDGSYALACNDLTTGQNTVTLLTGSVEDILLEVYATGSKEIVVDSSFSKDELNKLTETLKMTISYEDATAIPEGLEHLVKNVSQAKLIKAVGRLFNYVIRTQKRSLDHLQPVEIYYTNQFMKIDVHSKRNLELTETLRTKEKTGSLLWLLDKTKTAMGGRMLKQWMERPLIQKERIEERLEMVETFVNDYFLREDLKEKLKEVYDLERLAGKVAFGNVNARDLLQLRRSLLQVPAILEAISLLDNAYAARLIQGADPCESLTELLGRSIQENPPLSIKDGDIIKDGYNDKLDQYRYVSKNGKTWIAELEKRERDITGIKSLKIGYNRIFGYYIEVTKANLGALPEGRYERKQTLANAERFITDELKEKETLILEAEEKIVQLEYDLFTALREEVKVFIPKLQHLAKVISELDVLQSFATVSEEEQFVKPVLTTKREIFIKDGRHPVVEKVLNGKLYVPNDCIMPENMDVFLITGPNMSGKSTYMRQLALVTVMSQIGCFVPATEAVLPVFDQIFTRIGAADDLISGQSTFMVEMLEAKNAIANASERSLILFDEIGRGTSTYDGMALAQAIIEHIHDQIGAKTLFSTHYHELTVLEDSLDQLKNVHVSAIEENGKVVFLHKIQDGAADKSYGIHVAQLAELPDSLIARAKEVLAQLEGQEEIVIPKRVEVKEQEVIPEPVVVKEEPVAIEETKVDNKEESQLSFFGTEQSSKKQDKPVLDVKETAVLTQIKKIDLLDMTPLEAMNELYRLQKKLKKG.

607–614 serves as a coordination point for ATP; that stretch reads GPNMSGKS.

It belongs to the DNA mismatch repair MutS family.

In terms of biological role, this protein is involved in the repair of mismatches in DNA. It is possible that it carries out the mismatch recognition step. This protein has a weak ATPase activity. This Bacillus thuringiensis subsp. konkukian (strain 97-27) protein is DNA mismatch repair protein MutS.